We begin with the raw amino-acid sequence, 279 residues long: Replication protein A 32 kDa subunit A (279 aa).

Positions 1–39 are disordered; that stretch reads MMSFSQPDAFSPSQFTSSQNAAADSTTPSKSRGASSTMP. Positions 71-145 form a DNA-binding region, OB; that stretch reads VRLVGLVSGK…RATAFAIRPV (75 aa). Residues 181–210 form a disordered region; that stretch reads GSSSSNGFSEMTTPTSVKSNPAPVLSVTNG. Positions 190 to 199 are enriched in polar residues; it reads EMTTPTSVKS.

The protein belongs to the replication factor A protein 2 family. Heterotrimer of RPA1, RPA2 and RPA3 (canonical replication protein A complex). Interacts with RPA1A, RPA1B and RPA3. In terms of processing, phosphorylated in a cell-cycle-dependent manner (from the S phase until mitosis). In response to DNA damage, recruited to DNA-repair nuclear foci, as a hypophosphorylated form. In terms of tissue distribution, expressed in root tips, roots, shoot apical meristem (SAM), young leaves, flag leaves and ears, and at lower levels in mature leaves.

It localises to the nucleus. Functionally, component of the replication protein A complex (RPA) required for DNA recombination, repair and replication. The activity of RPA is mediated by single-stranded DNA binding and protein interactions. This Oryza sativa subsp. japonica (Rice) protein is Replication protein A 32 kDa subunit A (RPA2A).